Consider the following 201-residue polypeptide: NAD(P)H-dependent FMN reductase ntnL (201 aa).

FMN is bound by residues arginine 12, 90–93 (EYNG), and tyrosine 120.

Homodimer.

It catalyses the reaction FMNH2 + NADP(+) = FMN + NADPH + 2 H(+). It carries out the reaction FMNH2 + NAD(+) = FMN + NADH + 2 H(+). Its pathway is secondary metabolite biosynthesis; terpenoid biosynthesis. Functionally, NAD(P)H-dependent FMN reductase; part of the gene cluster that mediates the biosynthesis of the meroterpenoids nectripenoids A and B, as well as cochliquninone D and isocochliquninone E. The pathway probably begins with the HR-PKS ntnH that catalyzes two chain-extension steps to form a reduced triketide, which then primes the SAT domain in the NR-PKS ntnG to initiate three more cycles of extension to give a linear hexaketide corresponding to the polyketide part of nectripenoids. The FAD-dependent monooxygenase ntnJ then performs an oxidative decarboxylation at C11 of the ntnH/ntnG product, via an electrophilic aromatic hydroxylation with concomitant ipso-decarboxylation. The membrane-bound polyprenyl transferase ntnF then introduces a farnesyl group before the FAD-dependent monooxygenase ntnK functions as the first epoxidase on terminal C12'-C13' olefin, followed by a second epoxidation on C7'-C8' catalyzed by ntnA. The terpene cyclase/mutase ntnI then initiates the sequential tricyclic ring formation through protonation of the terminal epoxide and catalyzes the regioselective and stereoselective 6/6/6-tricyclic ring formation. The cytochrome P450 monooxygenase ntnM may then hydroxylate C1'. The sequence is that of NAD(P)H-dependent FMN reductase ntnL from Nectria sp.